The sequence spans 352 residues: Ketoisovalerate oxidoreductase subunit VorB (352 aa).

As to quaternary structure, heterotrimer of the VorA, VorB and VorC subunits.

The enzyme catalyses 3-methyl-2-oxobutanoate + 2 oxidized [2Fe-2S]-[ferredoxin] + CoA = 2-methylpropanoyl-CoA + 2 reduced [2Fe-2S]-[ferredoxin] + CO2 + H(+). This Methanothermobacter thermautotrophicus (strain ATCC 29096 / DSM 1053 / JCM 10044 / NBRC 100330 / Delta H) (Methanobacterium thermoautotrophicum) protein is Ketoisovalerate oxidoreductase subunit VorB (vorB).